Here is a 178-residue protein sequence, read N- to C-terminus: Large ribosomal subunit protein uL6 (178 aa).

It belongs to the universal ribosomal protein uL6 family. Part of the 50S ribosomal subunit.

In terms of biological role, this protein binds to the 23S rRNA, and is important in its secondary structure. It is located near the subunit interface in the base of the L7/L12 stalk, and near the tRNA binding site of the peptidyltransferase center. The chain is Large ribosomal subunit protein uL6 from Nitrosococcus oceani (strain ATCC 19707 / BCRC 17464 / JCM 30415 / NCIMB 11848 / C-107).